We begin with the raw amino-acid sequence, 153 residues long: UPF0743 protein YCR087C-A (153 aa).

2 C2HC LYAR-type zinc fingers span residues 1 to 26 (MVTFNCEVCNDTVPKKNTEKHYYRCP) and 27 to 52 (NAYYTCIDCSKTFEDGVSYKNHTSCI). Zn(2+) is bound by residues Cys6, Cys9, His21, Cys25, Cys32, Cys35, His48, and Cys51. Residues 63–96 (YKGNKKQKQKQQQKQQQKQHQHQPVATPAKKVEK) are disordered. Over residues 65–83 (GNKKQKQKQQQKQQQKQHQ) the composition is skewed to basic residues.

It belongs to the UPF0743 family.

It is found in the nucleus. The protein localises to the nucleolus. In Saccharomyces cerevisiae (strain ATCC 204508 / S288c) (Baker's yeast), this protein is UPF0743 protein YCR087C-A.